A 1912-amino-acid chain; its full sequence is Vitellogenin-1 (1912 aa).

An N-terminal signal peptide occupies residues 1–15; the sequence is MRGLISALVLTLVGS. The region spanning 24-663 is the Vitellogenin domain; that stretch reads FGENKVYTYN…AGSLIPTMAV (640 aa). An N-linked (GlcNAc...) asparagine glycan is attached at Asn163. Positions 948–972 are disordered; that stretch reads DSASGETDNIRDRQSVEDVSSGNSF. Residue Asn991 is glycosylated (N-linked (GlcNAc...) asparagine). 2 disordered regions span residues 1080–1329 and 1351–1432; these read KILD…SYDI and HWHS…RERN. Composition is skewed to low complexity over residues 1092 to 1124 and 1150 to 1235; these read NSRS…NRAS and SSSS…SSSK. Asn1206 carries N-linked (GlcNAc...) asparagine glycosylation. Positions 1259–1269 are enriched in basic and acidic residues; the sequence is EGERSVHEQKQ. Low complexity predominate over residues 1273–1299; sequence SSSSSSSRASSNSRSTSSSTSSSSESS. A compositionally biased stretch (basic and acidic residues) spans 1306–1316; the sequence is WKQDREAETKR. Residues 1319–1328 show a composition bias toward polar residues; it reads SQFNSHSSYD. Residues 1357–1381 are compositionally biased toward low complexity; it reads RTSSSSSSSSSESGSSHSNSSSSDS. An N-linked (GlcNAc...) asparagine glycan is attached at Asn1375. The span at 1397–1409 shows a compositional bias: basic residues; that stretch reads SHRHGEKAAHSSR. Residues 1640-1818 enclose the VWFD domain; the sequence is STCEVSKGDF…SWVLLEETCS (179 aa). Cystine bridges form between Cys1642/Cys1781 and Cys1665/Cys1817. N-linked (GlcNAc...) asparagine glycosylation is found at Asn1662, Asn1698, and Asn1703.

In terms of processing, phosvitin, an egg yolk storage protein, is one of the most highly phosphorylated (10%) proteins in nature. Post-translationally, cathepsin D is responsible for intraoocytic processing of vitellogenin. May contain intrachain disulfide bonds. As to expression, produced by the liver, secreted into the blood and then sequestered by receptor mediated endocytosis into growing oocytes, where it is generally cleaved, giving rise to the respective yolk components.

Precursor of the egg-yolk proteins that are sources of nutrients during early development of oviparous organisms. Functionally, phosvitin is believed to be of importance in sequestering calcium, iron and other cations for the developing embryo. The polypeptide is Vitellogenin-1 (VTG1) (Gallus gallus (Chicken)).